Reading from the N-terminus, the 276-residue chain is Mitochondrial outer membrane protein porin 1 (276 aa).

The protein belongs to the eukaryotic mitochondrial porin (TC 1.B.8.1) family. As to expression, expressed in shoot meristems, root meristematic zone, lateral roots, leaves, stigma and anthers.

The protein localises to the mitochondrion outer membrane. In terms of biological role, forms a channel through the mitochondrial outer membrane that allows diffusion of small hydrophilic molecules. The channel adopts an open conformation at low or zero membrane potential and a closed conformation at potentials above 30-40 mV. The open state has a weak anion selectivity whereas the closed state is cation-selective. Involved in plant development at reproductive stage, is important for pollen development and may regulate hydrogen peroxide generation during disease resistance. The protein is Mitochondrial outer membrane protein porin 1 (VDAC1) of Arabidopsis thaliana (Mouse-ear cress).